The following is a 288-amino-acid chain: MIMFALPNKGRISEPVMKVLEKAGLKITVKGRSLFANTVDDNIKVMFARARDIPEFVADGVADIGVTGYDLVLERNVEDKVDFLLDFGFGFAKLVLAAPESSNINSIDDIKEGMRVATEFPNLTKKYFEKLNKKVEIIELSGATEIAPFIGIADLISDLTSTGTTLRLNRLKVIDEIVSSTTRLIANKNSLKDKEKREKINQIVIAIKSVLFAETKRLIMMNAPKDKVEEIRKLIPGMAGPTVSKVLSDDNMVAIHAVVNEDEIFTLVPKLHALGARDILVVPIERIL.

It belongs to the ATP phosphoribosyltransferase family. Long subfamily. Mg(2+) is required as a cofactor.

The protein localises to the cytoplasm. It carries out the reaction 1-(5-phospho-beta-D-ribosyl)-ATP + diphosphate = 5-phospho-alpha-D-ribose 1-diphosphate + ATP. It functions in the pathway amino-acid biosynthesis; L-histidine biosynthesis; L-histidine from 5-phospho-alpha-D-ribose 1-diphosphate: step 1/9. With respect to regulation, feedback inhibited by histidine. Its function is as follows. Catalyzes the condensation of ATP and 5-phosphoribose 1-diphosphate to form N'-(5'-phosphoribosyl)-ATP (PR-ATP). Has a crucial role in the pathway because the rate of histidine biosynthesis seems to be controlled primarily by regulation of HisG enzymatic activity. This is ATP phosphoribosyltransferase (hisG) from Methanocaldococcus jannaschii (strain ATCC 43067 / DSM 2661 / JAL-1 / JCM 10045 / NBRC 100440) (Methanococcus jannaschii).